The chain runs to 70 residues: Phycobilisome 8.1 kDa linker polypeptide, phycocyanin-associated, rod (70 aa).

In terms of domain architecture, CpcD-like spans 5–63 (SRSFQVEVSGLHQNEVTNQNNYPIRSSGSVFITIPFSRFNEELQRINRLGGKIVNIQPL).

It belongs to the phycobilisome linker protein family.

Its subcellular location is the cellular thylakoid membrane. In terms of biological role, rod linker protein, associated with phycocyanin. Linker polypeptides determine the state of aggregation and the location of the disk-shaped phycobiliprotein units within the phycobilisome and modulate their spectroscopic properties in order to mediate a directed and optimal energy transfer. This chain is Phycobilisome 8.1 kDa linker polypeptide, phycocyanin-associated, rod (cpcD3), found in Microchaete diplosiphon (Fremyella diplosiphon).